Here is a 61-residue protein sequence, read N- to C-terminus: uncharacterized protein (61 aa).

A coiled-coil region spans residues Trp-24 to Arg-60.

This is an uncharacterized protein from Archaeoglobus fulgidus (strain ATCC 49558 / DSM 4304 / JCM 9628 / NBRC 100126 / VC-16).